The sequence spans 555 residues: CCR4-NOT transcription complex subunit 6-like (555 aa).

The interval 1 to 152 is required for interaction with CNOT1, CNOT3 and CNOT7; the sequence is MRLIGMPKEK…SLYQDPDGTR (152 aa). LRR repeat units follow at residues 57-78, 80-101, 103-125, and 126-148; these read HLTA…IAKL, NLVY…LGNM, SLRE…GRLF, and QLQT…YQDP. The segment at 158 to 555 is nuclease domain; it reads MLDNLAVHPE…VNGVHLPNRR (398 aa). Glutamate 240 is a binding site for Mg(2+). 4 residues coordinate substrate: glutamate 240, glutamate 276, histidine 360, and proline 365. Aspartate 410 is a binding site for Mg(2+). Residue aspartate 410 is the Proton donor/acceptor of the active site. Substrate contacts are provided by asparagine 412, asparagine 479, and phenylalanine 484.

This sequence belongs to the CCR4/nocturin family. Component of the CCR4-NOT complex; distinct complexes seem to exist that differ in the participation of probably mutually exclusive catalytic subunits; the complex contains two deadenylase subunits, CNOT6 or CNOT6L, and CNOT7 or CNOT8. Interacts with CNOT1, CNOT3, CNOT7, CNOT8 and CNOT9. Interacts with TOB1. Interacts with NANOS2. Interacts with ZFP36. Interacts with ZFP36L2. Interacts with RBM46. Requires Mg(2+) as cofactor.

It is found in the cytoplasm. It localises to the nucleus. It carries out the reaction Exonucleolytic cleavage of poly(A) to 5'-AMP.. Functionally, poly(A) nuclease with 3'-5' RNase activity. Catalytic component of the CCR4-NOT complex which is one of the major cellular mRNA deadenylases and is linked to various cellular processes including bulk mRNA degradation, miRNA-mediated repression, translational repression during translational initiation and general transcription regulation. Additional complex functions may be a consequence of its influence on mRNA expression. Involved in mRNA decay mediated by the major-protein-coding determinant of instability (mCRD) of the FOS gene in the cytoplasm. Involved in deadenylation-dependent degradation of CDKN1B mRNA. Its mRNA deadenylase activity can be inhibited by TOB1. Mediates cell proliferation and cell survival and prevents cellular senescence. This is CCR4-NOT transcription complex subunit 6-like (Cnot6l) from Mus musculus (Mouse).